A 556-amino-acid polypeptide reads, in one-letter code: Polypyrimidine tract-binding protein 1 (556 aa).

N-acetylmethionine is present on M1. S16 is modified (phosphoserine). Residues 35–54 (ASAANGNDSKKFKGDNRSTG) are disordered. RRM domains lie at 58-142 (RVIH…SSPN), 183-259 (LRII…FSKL), and 362-436 (SVLL…LSKH). A Glycyl lysine isopeptide (Lys-Gly) (interchain with G-Cter in SUMO2) cross-link involves residue K64. A Phosphotyrosine modification is found at Y126. Phosphothreonine is present on T137. S140 carries the post-translational modification Phosphoserine. Residue K217 forms a Glycyl lysine isopeptide (Lys-Gly) (interchain with G-Cter in SUMO2) linkage. A disordered region spans residues 436–458 (HQSVQLPREGQEDQGLTKDYGSS). S458 is modified (phosphoserine). One can recognise an RRM 4 domain in the interval 479-554 (ATLHLSNIPP…HHLRVSFSKS (76 aa)).

As to quaternary structure, monomer. Part of a ternary complex containing KHSRP, PTBP1, PTBP2 and HNRPH1. Interacts with RAVER1 and SFPQ.

It is found in the nucleus. Its function is as follows. Plays a role in pre-mRNA splicing and in the regulation of alternative splicing events. Activates exon skipping of its own pre-mRNA during muscle cell differentiation. Binds to the polypyrimidine tract of introns. May promote RNA looping when bound to two separate polypyrimidine tracts in the same pre-mRNA. May promote the binding of U2 snRNP to pre-mRNA. Cooperates with RAVER1 to modulate switching between mutually exclusive exons during maturation of the TPM1 pre-mRNA. Represses the splicing of MAPT/Tau exon 10. Binds to polypyrimidine-rich controlling element (PCE) of CFTR and promotes exon skipping of CFTR exon 9, thereby antagonizing TIA1 and its role in exon inclusion of CFTR exon 9. Plays a role in the splicing of pyruvate kinase PKM by binding repressively to a polypyrimidine tract flanking PKM exon 9, inhibiting exon 9 inclusion and resulting in exon 10 inclusion and production of the PKM M2 isoform. This Rattus norvegicus (Rat) protein is Polypyrimidine tract-binding protein 1 (Ptbp1).